The following is a 603-amino-acid chain: MTDVPVSRIRNFCIIAHIDHGKSTLADRMLQMTETVAQRKMKEQFLDNMDLERERGITIKLQAARMNYRSKDGEDYVLNLIDTPGHVDFSYEVSRSLAACEGALLVVDSSQGVEAQTLANVYLALENNLEIIPILNKIDLPGSEPERVANEIEEVVGLDCTGIIKASAKAGIGVDEILESIVHLVPPPSDTVDKPLRALIFDSYYDPYRGVIVYFRVMDGTVKTGDRVRLMASGKEYEIDELGVLSPNQIEVESLHAGEVGYFAAAIKAVEDARVGDTITLAEAPAKEPLPGYTEAKPMVFCGLFPTDADQYEDLREALNRLKLNDAALSYEPETSSAMGFGFRCGFLGLLHMEIVQERLEREYDLDLITTAPSVIYRVTTIDGEVIQVDNPSLLPSPQEREKVEEPYIEVEMITPETYVGTLMELCQSRRGVFKDMRYFTLSRTSLVYELPLAEVVTDFFDQLKSRSRGYASMEYQLIGYRENPLVKLDILVNGDSVDALAMIVHRDKAYYVGRALTEKLKELIPRHQFKVPIQAAIGSKVIASEHIPALRKDVLAKCYGGDISRKKKLLQKQAKGKKRMKAIGTVDVPQEAFMAVLKLDPQ.

Residues 7 to 189 (SRIRNFCIIA…SIVHLVPPPS (183 aa)) form the tr-type G domain. GTP is bound by residues 19–24 (DHGKST) and 136–139 (NKID).

This sequence belongs to the TRAFAC class translation factor GTPase superfamily. Classic translation factor GTPase family. LepA subfamily.

The protein localises to the cell inner membrane. The enzyme catalyses GTP + H2O = GDP + phosphate + H(+). Its function is as follows. Required for accurate and efficient protein synthesis under certain stress conditions. May act as a fidelity factor of the translation reaction, by catalyzing a one-codon backward translocation of tRNAs on improperly translocated ribosomes. Back-translocation proceeds from a post-translocation (POST) complex to a pre-translocation (PRE) complex, thus giving elongation factor G a second chance to translocate the tRNAs correctly. Binds to ribosomes in a GTP-dependent manner. This chain is Elongation factor 4, found in Crocosphaera subtropica (strain ATCC 51142 / BH68) (Cyanothece sp. (strain ATCC 51142)).